The primary structure comprises 145 residues: Large ribosomal subunit protein uL24 (145 aa).

Disordered stretches follow at residues 1 to 21 (MKFNPFVTSDRSKNRKRHFNA) and 122 to 145 (KAKSRQVGKEKGKYKEETIEKMQE). Lys-136 is covalently cross-linked (Glycyl lysine isopeptide (Lys-Gly) (interchain with G-Cter in SUMO2)). Thr-139 is subject to Phosphothreonine.

This sequence belongs to the universal ribosomal protein uL24 family. As to quaternary structure, component of the large ribosomal subunit. Interacts with DHX33. Ufmylated by UFL1 in response to endoplasmic reticulum stress, promoting reticulophagy of endoplasmic reticulum sheets.

The protein resides in the cytoplasm. Component of the large ribosomal subunit. The ribosome is a large ribonucleoprotein complex responsible for the synthesis of proteins in the cell. The chain is Large ribosomal subunit protein uL24 (RPL26) from Bos taurus (Bovine).